The chain runs to 191 residues: Hypoxanthine/guanine phosphoribosyltransferase (191 aa).

This sequence belongs to the purine/pyrimidine phosphoribosyltransferase family. Archaeal HPRT subfamily. Homodimer.

The protein resides in the cytoplasm. The catalysed reaction is IMP + diphosphate = hypoxanthine + 5-phospho-alpha-D-ribose 1-diphosphate. It carries out the reaction GMP + diphosphate = guanine + 5-phospho-alpha-D-ribose 1-diphosphate. It functions in the pathway purine metabolism; IMP biosynthesis via salvage pathway; IMP from hypoxanthine: step 1/1. Functionally, catalyzes a salvage reaction resulting in the formation of IMP that is energically less costly than de novo synthesis. In Methanocella arvoryzae (strain DSM 22066 / NBRC 105507 / MRE50), this protein is Hypoxanthine/guanine phosphoribosyltransferase.